We begin with the raw amino-acid sequence, 508 residues long: Steroid 17-alpha-hydroxylase/17,20 lyase (508 aa).

Residue cysteine 442 participates in heme binding.

The protein belongs to the cytochrome P450 family. Heme is required as a cofactor.

It is found in the endoplasmic reticulum membrane. The protein resides in the microsome membrane. The enzyme catalyses a C21-steroid + reduced [NADPH--hemoprotein reductase] + O2 = a 17alpha-hydroxy-C21-steroid + oxidized [NADPH--hemoprotein reductase] + H2O + H(+). It catalyses the reaction progesterone + reduced [NADPH--hemoprotein reductase] + O2 = 17alpha-hydroxyprogesterone + oxidized [NADPH--hemoprotein reductase] + H2O + H(+). It carries out the reaction pregnenolone + reduced [NADPH--hemoprotein reductase] + O2 = 17alpha-hydroxypregnenolone + oxidized [NADPH--hemoprotein reductase] + H2O + H(+). The catalysed reaction is 17alpha-hydroxyprogesterone + reduced [NADPH--hemoprotein reductase] + O2 = androst-4-ene-3,17-dione + acetate + oxidized [NADPH--hemoprotein reductase] + H2O + 2 H(+). The enzyme catalyses 17alpha-hydroxyprogesterone + reduced [NADPH--hemoprotein reductase] + O2 = 16alpha,17alpha-dihydroxyprogesterone + oxidized [NADPH--hemoprotein reductase] + H2O + H(+). It catalyses the reaction 16alpha,17alpha-dihydroxyprogesterone + reduced [NADPH--hemoprotein reductase] + O2 = 6beta,16alpha,17alpha-trihydroxyprogesterone + oxidized [NADPH--hemoprotein reductase] + H2O + H(+). It carries out the reaction 17alpha-hydroxypregnenolone + reduced [NADPH--hemoprotein reductase] + O2 = 3beta-hydroxyandrost-5-en-17-one + acetate + oxidized [NADPH--hemoprotein reductase] + H2O + 2 H(+). The catalysed reaction is 16alpha,17alpha-dihydroxypregnenolone + reduced [NADPH--hemoprotein reductase] + O2 = 3beta,16alpha-dihydroxy-androst-5-en-17-one + acetate + oxidized [NADPH--hemoprotein reductase] + H2O + 2 H(+). The enzyme catalyses 3beta-hydroxyandrost-5-en-17-one + reduced [NADPH--hemoprotein reductase] + O2 = 3beta,16alpha-dihydroxy-androst-5-en-17-one + oxidized [NADPH--hemoprotein reductase] + H2O + H(+). It catalyses the reaction androst-4-ene-3,17-dione + reduced [NADPH--hemoprotein reductase] + O2 = 16alpha-hydroxyandrost-4-ene-3,17-dione + oxidized [NADPH--hemoprotein reductase] + H2O + H(+). It functions in the pathway steroid hormone biosynthesis. It participates in steroid biosynthesis; glucocorticoid biosynthesis. With respect to regulation, regulated predominantly by intracellular cAMP levels. The 17,20-lyase activity is stimulated by cytochrome b5, which acts as an allosteric effector increasing the Vmax of the lyase activity. In terms of biological role, a cytochrome P450 monooxygenase involved in corticoid and androgen biosynthesis. Catalyzes 17-alpha hydroxylation of C21 steroids, which is common for both pathways. A second oxidative step, required only for androgen synthesis, involves an acyl-carbon cleavage. The 17-alpha hydroxy intermediates, as part of adrenal glucocorticoids biosynthesis pathway, are precursors of cortisol. Hydroxylates steroid hormones, pregnenolone and progesterone to form 17-alpha hydroxy metabolites, followed by the cleavage of the C17-C20 bond to form C19 steroids, dehydroepiandrosterone (DHEA) and androstenedione. Has 16-alpha hydroxylase activity. Catalyzes 16-alpha hydroxylation of 17-alpha hydroxy pregnenolone, followed by the cleavage of the C17-C20 bond to form 16-alpha-hydroxy DHEA. Also 16-alpha hydroxylates androgens, relevant for estriol synthesis. Mechanistically, uses molecular oxygen inserting one oxygen atom into a substrate, and reducing the second into a water molecule, with two electrons provided by NADPH via cytochrome P450 reductase (CPR; NADPH-ferrihemoprotein reductase). This chain is Steroid 17-alpha-hydroxylase/17,20 lyase (CYP17A1), found in Cavia porcellus (Guinea pig).